The primary structure comprises 368 residues: DNA-directed RNA polymerase subunit alpha (368 aa).

The segment at 1 to 231 (MLWKGFQKPK…DHMNIFINFE (231 aa)) is alpha N-terminal domain (alpha-NTD). Residues 243–368 (KPEIRNENLN…GFGGDNNPGF (126 aa)) form an alpha C-terminal domain (alpha-CTD) region.

The protein belongs to the RNA polymerase alpha chain family. In terms of assembly, homodimer. The RNAP catalytic core consists of 2 alpha, 1 beta, 1 beta' and 1 omega subunit. When a sigma factor is associated with the core the holoenzyme is formed, which can initiate transcription.

The catalysed reaction is RNA(n) + a ribonucleoside 5'-triphosphate = RNA(n+1) + diphosphate. Functionally, DNA-dependent RNA polymerase catalyzes the transcription of DNA into RNA using the four ribonucleoside triphosphates as substrates. In Koribacter versatilis (strain Ellin345), this protein is DNA-directed RNA polymerase subunit alpha.